The sequence spans 300 residues: MNQSYGRLVSRAAIAATAMASLLLLIKIFAWWYTGSVSILAALVDSLVDIGASLTNLLVVRYSLQPADDNHSFGHGKAESLAALAQSMFISGSALFLFLTGIQHLISPTPMTDPGVGVIVTIVALICTIILVSFQRWVVRRTQSQAVRADMLHYQSDVMMNGAILLALGLSWYGWHRADALFALGIGIYILYSALRMGYEAVQSLLDRALPDEERQEIIDIVTSWPGVSGAHDLRTRQSGPTRFIQIHLEMEDSLPLVQAHMVADQVEQAILRRFPGSDVIIHQDPCSVVPREGKRSMLS.

4 helical membrane-spanning segments follow: residues 12–32 (AAIAATAMASLLLLIKIFAWW), 39–59 (ILAALVDSLVDIGASLTNLLV), 82–102 (AALAQSMFISGSALFLFLTGI), and 114–134 (PGVGVIVTIVALICTIILVSF). The Zn(2+) site is built by Asp-45 and Asp-49. Residues His-153 and Asp-157 each contribute to the Zn(2+) site. 2 consecutive transmembrane segments (helical) span residues 156 to 176 (SDVMMNGAILLALGLSWYGWH) and 178 to 198 (ADALFALGIGIYILYSALRMG).

It belongs to the cation diffusion facilitator (CDF) transporter (TC 2.A.4) family. FieF subfamily. In terms of assembly, homodimer.

The protein localises to the cell inner membrane. The enzyme catalyses Zn(2+)(in) + H(+)(out) = Zn(2+)(out) + H(+)(in). It carries out the reaction Cd(2+)(in) + H(+)(out) = Cd(2+)(out) + H(+)(in). The catalysed reaction is Fe(2+)(in) + H(+)(out) = Fe(2+)(out) + H(+)(in). Divalent metal cation transporter which exports Zn(2+), Cd(2+) and possibly Fe(2+). May be involved in zinc and iron detoxification by efflux. In Escherichia coli O157:H7 (strain EC4115 / EHEC), this protein is Cation-efflux pump FieF.